A 341-amino-acid chain; its full sequence is Methionine import ATP-binding protein MetN (341 aa).

Positions 9-247 constitute an ABC transporter domain; it reads ISVQDVSKKL…SENSITNELF (239 aa). 41–48 lines the ATP pocket; it reads GHSGSGKT.

Belongs to the ABC transporter superfamily. Methionine importer (TC 3.A.1.24) family. In terms of assembly, the complex is composed of two ATP-binding proteins (MetN), two transmembrane proteins (MetI) and a solute-binding protein (MetQ).

It localises to the cell inner membrane. It carries out the reaction L-methionine(out) + ATP + H2O = L-methionine(in) + ADP + phosphate + H(+). The catalysed reaction is D-methionine(out) + ATP + H2O = D-methionine(in) + ADP + phosphate + H(+). In terms of biological role, part of the ABC transporter complex MetNIQ involved in methionine import. Responsible for energy coupling to the transport system. The protein is Methionine import ATP-binding protein MetN of Chlamydia pneumoniae (Chlamydophila pneumoniae).